The primary structure comprises 328 residues: Beta-ribofuranosylphenol 5'-phosphate synthase (328 aa).

This sequence belongs to the beta-RFA-P synthase family. Homodimer. The cofactor is Mg(2+).

It carries out the reaction 5-phospho-alpha-D-ribose 1-diphosphate + 4-hydroxybenzoate + H(+) = 4-(beta-D-ribofuranosyl)phenol 5'-phosphate + CO2 + diphosphate. The catalysed reaction is 4-aminobenzoate + 5-phospho-alpha-D-ribose 1-diphosphate + H(+) = 4-(beta-D-ribofuranosyl)aminobenzene 5'-phosphate + CO2 + diphosphate. It participates in cofactor biosynthesis; 5,6,7,8-tetrahydromethanopterin biosynthesis. In terms of biological role, catalyzes the condensation of 4-hydroxybenzoate (HB) with 5-phospho-alpha-D-ribose 1-diphosphate (PRPP) to produce beta-ribofuranosylphenol 5'-phosphate (beta-RFH-P). Also catalyzes the condensation of 4-aminobenzoate (pABA) with PRPP to produce beta-ribofuranosylaminobenzene 5'-phosphate (beta-RFA-P). Only 4-hydroxybenzoate is known to be biosynthesized by methanogenic archaea, but 4-aminobenzoate can be used as substrate by growing methanogens when it is present in the growth medium. The polypeptide is Beta-ribofuranosylphenol 5'-phosphate synthase (Methanocaldococcus jannaschii (strain ATCC 43067 / DSM 2661 / JAL-1 / JCM 10045 / NBRC 100440) (Methanococcus jannaschii)).